The primary structure comprises 846 residues: Aminopeptidase N (846 aa).

Residues glutamate 120 and 252–256 (GAMEN) contribute to the substrate site. Histidine 288 is a Zn(2+) binding site. Residue glutamate 289 is the Proton acceptor of the active site. Residues histidine 292 and glutamate 311 each coordinate Zn(2+).

The protein belongs to the peptidase M1 family. In terms of assembly, monomer. Zn(2+) is required as a cofactor.

The protein resides in the cytoplasm. The catalysed reaction is Release of an N-terminal amino acid, Xaa-|-Yaa- from a peptide, amide or arylamide. Xaa is preferably Ala, but may be most amino acids including Pro (slow action). When a terminal hydrophobic residue is followed by a prolyl residue, the two may be released as an intact Xaa-Pro dipeptide.. Aminopeptidase with broad substrate specificity to several peptides. It has more affinity for oligopeptides than for dipeptides. It plays an essential role in the metabolism, it may be involved in nitrogen supply or protein turnover. This Lactococcus lactis subsp. cremoris (strain MG1363) protein is Aminopeptidase N (pepN).